A 118-amino-acid polypeptide reads, in one-letter code: uncharacterized protein (118 aa).

Residues 95 to 115 (IIINLVIILAMYAPEIIGKLL) traverse the membrane as a helical segment.

The protein belongs to the M.jannaschii MJ0023/MJ0349/MJ1072/MJ1074/MJ1107/MJECL16 family.

It is found in the membrane. This is an uncharacterized protein from Methanocaldococcus jannaschii (strain ATCC 43067 / DSM 2661 / JAL-1 / JCM 10045 / NBRC 100440) (Methanococcus jannaschii).